The chain runs to 294 residues: Cytidine deaminase (294 aa).

2 CMP/dCMP-type deaminase domains span residues 48 to 168 (DEDA…FGPK) and 186 to 294 (LTGD…VLLG). 89–91 (NME) is a binding site for substrate. Residue His102 participates in Zn(2+) binding. Catalysis depends on Glu104, which acts as the Proton donor. Cys129 and Cys132 together coordinate Zn(2+).

It belongs to the cytidine and deoxycytidylate deaminase family. Homodimer. Requires Zn(2+) as cofactor.

It carries out the reaction cytidine + H2O + H(+) = uridine + NH4(+). The enzyme catalyses 2'-deoxycytidine + H2O + H(+) = 2'-deoxyuridine + NH4(+). This enzyme scavenges exogenous and endogenous cytidine and 2'-deoxycytidine for UMP synthesis. This chain is Cytidine deaminase, found in Salmonella newport (strain SL254).